The chain runs to 979 residues: Translation initiation factor IF-2 (979 aa).

The segment at 68–386 (VKQKQGTPAS…DKRDAASRAA (319 aa)) is disordered. 3 stretches are compositionally biased toward basic and acidic residues: residues 102-179 (QDMR…KPEE), 217-229 (EMEK…EVFR), and 260-273 (TKED…DADG). Over residues 317–326 (RPAQQQSNAS) the composition is skewed to polar residues. Residues 347-356 (DVQRQVKETL) are compositionally biased toward basic and acidic residues. Residues 478-646 (ARPPIVTVMG…KVLLEADILE (169 aa)) enclose the tr-type G domain. The segment at 487 to 494 (GHVDHGKT) is G1. 487-494 (GHVDHGKT) provides a ligand contact to GTP. The G2 stretch occupies residues 512–516 (GITQH). The tract at residues 534-537 (DTPG) is G3. Residues 534–538 (DTPGH) and 588–591 (NKID) contribute to the GTP site. Residues 588 to 591 (NKID) form a G4 region. The segment at 624–626 (SAK) is G5.

This sequence belongs to the TRAFAC class translation factor GTPase superfamily. Classic translation factor GTPase family. IF-2 subfamily.

It localises to the cytoplasm. In terms of biological role, one of the essential components for the initiation of protein synthesis. Protects formylmethionyl-tRNA from spontaneous hydrolysis and promotes its binding to the 30S ribosomal subunits. Also involved in the hydrolysis of GTP during the formation of the 70S ribosomal complex. In Porphyromonas gingivalis (strain ATCC BAA-308 / W83), this protein is Translation initiation factor IF-2.